Reading from the N-terminus, the 311-residue chain is Aquaporin-1 (311 aa).

Over 1 to 16 (MHPQVASLFDNVYEDL) the chain is Cytoplasmic. The chain crosses the membrane as a helical span at residues 17-37 (AAATLEFIGTAFFLLFGLGGI). The Extracellular segment spans residues 38–56 (QASTAEDTASSQPPASGIE). Residues 57-77 (HVLYISTCMGFSLVVSAWLFF) form a helical membrane-spanning segment. Residue Arg78 is a topological domain, cytoplasmic. The helical transmembrane segment at 79–99 (VTGGLFNPNISFALLLVGGLK) threads the bilayer. The short motif at 85–87 (NPN) is the NPA 1 element. Position 100 (Pro100) is a topological domain, extracellular. A helical membrane pass occupies residues 101 to 121 (LRFVLFCIAQLTGAIAGAAIV). The Cytoplasmic portion of the chain corresponds to 122-143 (RGLTSAPLSVNNVLQQGTSAAQ). The chain crosses the membrane as a helical span at residues 144-164 (GVFIEMFITAALVLSVLMLAA). The Extracellular segment spans residues 165-168 (EKHE). The chain crosses the membrane as a helical span at residues 169–189 (ATPFAPVGIGLTLFACHLFAV). Residues 190–215 (YYTGAAMNSARAFGPAVISGFPEPQH) are Cytoplasmic-facing. Residues 197-199 (NSA) carry the NPA 2 motif. A helical membrane pass occupies residues 216-236 (WVYWVGPFLGSLLGAGFYATL). Residues 237–311 (KHYKYWRLNP…TSSRTNFSPV (75 aa)) lie on the Extracellular side of the membrane. A disordered region spans residues 276–311 (DEETRNGCASNEEGVRATGDEKSSNATSSRTNFSPV). Positions 288–298 (EGVRATGDEKS) are enriched in basic and acidic residues. Residues 299-311 (SNATSSRTNFSPV) show a composition bias toward polar residues. Asn300 is a glycosylation site (N-linked (GlcNAc...) asparagine).

This sequence belongs to the MIP/aquaporin (TC 1.A.8) family.

The protein localises to the cell membrane. It carries out the reaction H2O(in) = H2O(out). The catalysed reaction is H2O2(out) = H2O2(in). The enzyme catalyses nitric oxide(out) = nitric oxide(in). It catalyses the reaction CO2(out) = CO2(in). Functionally, water channel required to facilitate the transport of water across membranes. Also mediates the transport nitric oxide, hydrogen peroxide and carbon dioxide across the membrane. Required for Hartig net development in trembling aspen trees. Contributes in fungal cellular processes during the basidiocarp formation. The polypeptide is Aquaporin-1 (Laccaria bicolor (Bicoloured deceiver)).